The following is a 255-amino-acid chain: NAD kinase (255 aa).

Asp-44 (proton acceptor) is an active-site residue. NAD(+) is bound by residues 44–45 (DG), His-49, 114–115 (NE), Asp-144, Ala-152, 155–160 (SAYNLS), and Gln-216.

The protein belongs to the NAD kinase family. It depends on a divalent metal cation as a cofactor.

It localises to the cytoplasm. The catalysed reaction is NAD(+) + ATP = ADP + NADP(+) + H(+). Involved in the regulation of the intracellular balance of NAD and NADP, and is a key enzyme in the biosynthesis of NADP. Catalyzes specifically the phosphorylation on 2'-hydroxyl of the adenosine moiety of NAD to yield NADP. In Rickettsia akari (strain Hartford), this protein is NAD kinase.